The chain runs to 218 residues: Pyrrolidone-carboxylate peptidase 2 (218 aa).

Active-site residues include E83, C146, and H170.

The protein belongs to the peptidase C15 family. Homotetramer.

Its subcellular location is the cytoplasm. It catalyses the reaction Release of an N-terminal pyroglutamyl group from a polypeptide, the second amino acid generally not being Pro.. In terms of biological role, removes 5-oxoproline from various penultimate amino acid residues except L-proline. The protein is Pyrrolidone-carboxylate peptidase 2 of Photorhabdus laumondii subsp. laumondii (strain DSM 15139 / CIP 105565 / TT01) (Photorhabdus luminescens subsp. laumondii).